The following is a 264-amino-acid chain: Tryptophan synthase alpha chain (264 aa).

Residues E45 and D56 each act as proton acceptor in the active site.

The protein belongs to the TrpA family. In terms of assembly, tetramer of two alpha and two beta chains.

It carries out the reaction (1S,2R)-1-C-(indol-3-yl)glycerol 3-phosphate + L-serine = D-glyceraldehyde 3-phosphate + L-tryptophan + H2O. The protein operates within amino-acid biosynthesis; L-tryptophan biosynthesis; L-tryptophan from chorismate: step 5/5. In terms of biological role, the alpha subunit is responsible for the aldol cleavage of indoleglycerol phosphate to indole and glyceraldehyde 3-phosphate. The sequence is that of Tryptophan synthase alpha chain from Leptospira borgpetersenii serovar Hardjo-bovis (strain JB197).